Consider the following 285-residue polypeptide: Phospholipid phosphatase 1 (285 aa).

Over 1 to 6 the chain is Cytoplasmic; the sequence is MFDKAR. The PDZ-binding; involved in localization to the apical cell membrane motif lies at 5 to 7; that stretch reads ARL. Residues 7-27 traverse the membrane as a helical segment; sequence LPYVALDVLCVVLAGLPFAIL. Residues 28–53 lie on the Extracellular side of the membrane; sequence TSRHTPFQRGIFCNDESIKYPYKEDT. The chain crosses the membrane as a helical span at residues 54 to 74; the sequence is IPYALLGGIMIPFSIVVMIIG. Residues 75 to 94 lie on the Cytoplasmic side of the membrane; it reads ETLSVYCNLLHSNSFIRNNY. Residues 95–115 traverse the membrane as a helical segment; it reads IATIYKSIGTFLFGAAASQSL. At 116–165 the chain is on the extracellular side; sequence TDIAKYSIGRLRPHFLSVCDPDWSKVNCSDGYIEYYVCRGNAEKVKEGRL. Residues 120 to 128 form a phosphatase sequence motif I region; that stretch reads KYSIGRLRP. N142 carries an N-linked (GlcNAc...) asparagine glycan. The helical transmembrane segment at 166–186 threads the bilayer; sequence SFYSGHSSFSMYCMVFVALYL. The interval 168–171 is phosphatase sequence motif II; the sequence is YSGH. The Proton donors role is filled by H171. The Cytoplasmic portion of the chain corresponds to 187-199; it reads QARMKGDWARLLR. The chain crosses the membrane as a helical span at residues 200-220; sequence PTLQFGLVAASIYVGLSRISD. The tract at residues 216–227 is phosphatase sequence motif III; that stretch reads SRISDYKHHWSD. At 221–229 the chain is on the extracellular side; it reads YKHHWSDVL. The Nucleophile role is filled by H223. Residues 230–250 form a helical membrane-spanning segment; the sequence is TGLIQGAIVAILVAVYVSDFF. Over 251 to 285 the chain is Cytoplasmic; that stretch reads KARNSPFQERKEEDSHTTLHETPTAGNHYRSNHQP. A compositionally biased stretch (basic and acidic residues) spans 260–269; it reads RKEEDSHTTL. Residues 260–285 form a disordered region; the sequence is RKEEDSHTTLHETPTAGNHYRSNHQP.

Belongs to the PA-phosphatase related phosphoesterase family. Forms functional homodimers and homooligomers that are not required for substrate recognition and catalytic activity. Can also form heterooligomers with PLPP2 and PLPP3. Post-translationally, N-glycosylated. N-linked sugars are of the complex type. N-glycosylation is not required for the phosphatase activity.

It localises to the cell membrane. Its subcellular location is the apical cell membrane. It is found in the membrane raft. The protein resides in the membrane. The protein localises to the caveola. It carries out the reaction a 1,2-diacyl-sn-glycero-3-phosphate + H2O = a 1,2-diacyl-sn-glycerol + phosphate. The enzyme catalyses 1,2-dihexadecanoyl-sn-glycero-3-phosphate + H2O = 1,2-dihexadecanoyl-sn-glycerol + phosphate. The catalysed reaction is 1,2-di-(9Z-octadecenoyl)-sn-glycero-3-phosphate + H2O = 1,2-di-(9Z-octadecenoyl)-sn-glycerol + phosphate. It catalyses the reaction a monoacyl-sn-glycero-3-phosphate + H2O = a monoacylglycerol + phosphate. It carries out the reaction (9Z)-octadecenoyl-sn-glycero-3-phosphate + H2O = (9Z-octadecenoyl)-glycerol + phosphate. The enzyme catalyses a 1-acyl-sn-glycero-3-phosphate + H2O = a 1-acyl-sn-glycerol + phosphate. The catalysed reaction is 1-(9Z-octadecenoyl)-sn-glycero-3-phosphate + H2O = 1-(9Z-octadecenoyl)-sn-glycerol + phosphate. It catalyses the reaction a 1,2-diacyl-sn-glycerol 3-diphosphate + H2O = a 1,2-diacyl-sn-glycero-3-phosphate + phosphate + H(+). It carries out the reaction sphing-4-enine 1-phosphate + H2O = sphing-4-enine + phosphate. The enzyme catalyses an N-acylsphing-4-enine 1-phosphate + H2O = an N-acylsphing-4-enine + phosphate. The catalysed reaction is N-(octanoyl)-sphing-4-enine-1-phosphate + H2O = N-octanoylsphing-4-enine + phosphate. It catalyses the reaction N-(9Z-octadecenoyl)-ethanolamine phosphate + H2O = N-(9Z-octadecenoyl) ethanolamine + phosphate. It carries out the reaction 1-hexadecanoyl-2-(9Z-octadecenoyl)-sn-glycero-3-phosphate + H2O = 1-hexadecanoyl-2-(9Z-octadecenoyl)-sn-glycerol + phosphate. Its pathway is lipid metabolism; phospholipid metabolism. Magnesium-independent phospholipid phosphatase. Insensitive to N-ethylmaleimide. Functionally, magnesium-independent phospholipid phosphatase of the plasma membrane that catalyzes the dephosphorylation of a variety of glycerolipid and sphingolipid phosphate esters including phosphatidate/PA, lysophosphatidate/LPA, diacylglycerol pyrophosphate/DGPP, sphingosine 1-phosphate/S1P and ceramide 1-phosphate/C1P. Also acts on N-oleoyl ethanolamine phosphate/N-(9Z-octadecenoyl)-ethanolamine phosphate, a potential physiological compound. Through its extracellular phosphatase activity allows both the hydrolysis and the cellular uptake of these bioactive lipid mediators from the milieu, regulating signal transduction in different cellular processes. It is for instance essential for the extracellular hydrolysis of S1P and subsequent conversion into intracellular S1P. Involved in the regulation of inflammation, platelets activation, cell proliferation and migration among other processes. May also have an intracellular activity to regulate phospholipid-mediated signaling pathways. The chain is Phospholipid phosphatase 1 from Cavia porcellus (Guinea pig).